The sequence spans 448 residues: Chaperone SurA (448 aa).

The first 27 residues, 1-27, serve as a signal peptide directing secretion; that stretch reads MKKTLRFAAVAAGLVASLITVAPSASA. PpiC domains lie at 185–288 and 301–399; these read QQDL…RLVD and IVQT…QVLG. Residues 230–249 form a disordered region; the sequence is LAKSQSEADDAKKGGDLGFK.

It localises to the periplasm. It catalyses the reaction [protein]-peptidylproline (omega=180) = [protein]-peptidylproline (omega=0). Its function is as follows. Chaperone involved in the correct folding and assembly of outer membrane proteins. Recognizes specific patterns of aromatic residues and the orientation of their side chains, which are found more frequently in integral outer membrane proteins. May act in both early periplasmic and late outer membrane-associated steps of protein maturation. The polypeptide is Chaperone SurA (Burkholderia thailandensis (strain ATCC 700388 / DSM 13276 / CCUG 48851 / CIP 106301 / E264)).